Reading from the N-terminus, the 103-residue chain is Large ribosomal subunit protein P1 (103 aa).

A disordered region spans residues 66–103 (PAAGAPAAGAAGGAVEEKKEEKKAESEDESDDDMGLFD). Positions 80–90 (VEEKKEEKKAE) are enriched in basic and acidic residues. A compositionally biased stretch (acidic residues) spans 91 to 103 (SEDESDDDMGLFD).

Belongs to the eukaryotic ribosomal protein P1/P2 family. P1 and P2 exist as dimers at the large ribosomal subunit.

Its function is as follows. Plays an important role in the elongation step of protein synthesis. This Polyorchis penicillatus (Hydromedusa) protein is Large ribosomal subunit protein P1.